Reading from the N-terminus, the 369-residue chain is Anhydro-N-acetylmuramic acid kinase (369 aa).

12-19 provides a ligand contact to ATP; it reads GTSLDGVD.

It belongs to the anhydro-N-acetylmuramic acid kinase family.

It catalyses the reaction 1,6-anhydro-N-acetyl-beta-muramate + ATP + H2O = N-acetyl-D-muramate 6-phosphate + ADP + H(+). It participates in amino-sugar metabolism; 1,6-anhydro-N-acetylmuramate degradation. It functions in the pathway cell wall biogenesis; peptidoglycan recycling. In terms of biological role, catalyzes the specific phosphorylation of 1,6-anhydro-N-acetylmuramic acid (anhMurNAc) with the simultaneous cleavage of the 1,6-anhydro ring, generating MurNAc-6-P. Is required for the utilization of anhMurNAc either imported from the medium or derived from its own cell wall murein, and thus plays a role in cell wall recycling. The protein is Anhydro-N-acetylmuramic acid kinase of Escherichia coli (strain SMS-3-5 / SECEC).